A 281-amino-acid chain; its full sequence is 2,3,4,5-tetrahydropyridine-2,6-dicarboxylate N-succinyltransferase (281 aa).

Substrate contacts are provided by arginine 108 and aspartate 145.

The protein belongs to the transferase hexapeptide repeat family. Homotrimer.

Its subcellular location is the cytoplasm. The enzyme catalyses (S)-2,3,4,5-tetrahydrodipicolinate + succinyl-CoA + H2O = (S)-2-succinylamino-6-oxoheptanedioate + CoA. Its pathway is amino-acid biosynthesis; L-lysine biosynthesis via DAP pathway; LL-2,6-diaminopimelate from (S)-tetrahydrodipicolinate (succinylase route): step 1/3. In Rhodopseudomonas palustris (strain BisA53), this protein is 2,3,4,5-tetrahydropyridine-2,6-dicarboxylate N-succinyltransferase.